A 428-amino-acid chain; its full sequence is ORC1-type DNA replication protein 5 (428 aa).

ATP contacts are provided by residues 62–66 (TGKSL), tyrosine 219, and arginine 231.

It belongs to the CDC6/cdc18 family.

In terms of biological role, involved in regulation of DNA replication. This chain is ORC1-type DNA replication protein 5 (orc5), found in Halobacterium salinarum (strain ATCC 700922 / JCM 11081 / NRC-1) (Halobacterium halobium).